A 305-amino-acid polypeptide reads, in one-letter code: Ribonuclease BN (305 aa).

Residues histidine 64, histidine 66, aspartate 68, histidine 69, histidine 141, aspartate 212, and histidine 270 each coordinate Zn(2+). Aspartate 68 acts as the Proton acceptor in catalysis.

It belongs to the RNase Z family. RNase BN subfamily. As to quaternary structure, homodimer. It depends on Zn(2+) as a cofactor.

In terms of biological role, zinc phosphodiesterase, which has both exoribonuclease and endoribonuclease activities. In Shigella boydii serotype 18 (strain CDC 3083-94 / BS512), this protein is Ribonuclease BN.